Reading from the N-terminus, the 1100-residue chain is Guanylate cyclase 2G (1100 aa).

The N-terminal stretch at 1 to 43 (MASRTRSESPLEPRLYAGAGSRADHPSLVLMLSVVMLVTCLEA) is a signal peptide. Residues 44–481 (AKLTVGFHAP…VAGMTVTVTA (438 aa)) are Extracellular-facing. N-linked (GlcNAc...) asparagine glycosylation is found at asparagine 55, asparagine 85, asparagine 94, asparagine 217, asparagine 225, asparagine 238, asparagine 418, asparagine 440, and asparagine 443. The chain crosses the membrane as a helical span at residues 482–502 (VIPTVTFLVLASAAAITGLML). Residues 503–1100 (WRLRGKVQSH…EEEAKVSEIL (598 aa)) are Cytoplasmic-facing. The Protein kinase domain maps to 546-837 (SDTSTVKASA…EASPRGHVSI (292 aa)). Residues 901-1031 (TIFFSDIVGF…DTVNMASRME (131 aa)) enclose the Guanylate cyclase domain.

The protein belongs to the adenylyl cyclase class-4/guanylyl cyclase family. In terms of assembly, homooligomer. In vitro interacts with NPR1/GC-A. In terms of processing, N-glycosylated. In terms of tissue distribution, highly expressed in testis.

The protein localises to the cell membrane. The enzyme catalyses GTP = 3',5'-cyclic GMP + diphosphate. The sequence is that of Guanylate cyclase 2G (Gucy2g) from Mus musculus (Mouse).